The following is a 249-amino-acid chain: Adenylate kinase (249 aa).

Glycine 43–threonine 48 is an ATP binding site. Residues alanine 63–valine 92 form an NMP region. AMP contacts are provided by residues threonine 64, arginine 69, glycine 90–valine 92, glycine 119–arginine 122, and glutamine 126. An LID region spans residues glycine 160–aspartate 197. ATP-binding positions include arginine 161 and serine 170–tyrosine 171. Positions proline 177–aspartate 197 are disordered. Residues arginine 194 and arginine 205 each coordinate AMP. Glutamine 233 is an ATP binding site.

This sequence belongs to the adenylate kinase family. AK2 subfamily. As to quaternary structure, monomer.

The protein resides in the cytoplasm. The protein localises to the cytosol. It localises to the mitochondrion intermembrane space. The enzyme catalyses AMP + ATP = 2 ADP. Catalyzes the reversible transfer of the terminal phosphate group between ATP and AMP. Plays an important role in cellular energy homeostasis and in adenine nucleotide metabolism. Adenylate kinase activity is critical for regulation of the phosphate utilization and the AMP de novo biosynthesis pathways. The sequence is that of Adenylate kinase from Candida albicans (strain SC5314 / ATCC MYA-2876) (Yeast).